A 514-amino-acid polypeptide reads, in one-letter code: 1-pyrroline-5-carboxylate dehydrogenase (514 aa).

Catalysis depends on residues E286 and C320.

It belongs to the aldehyde dehydrogenase family. RocA subfamily.

It carries out the reaction L-glutamate 5-semialdehyde + NAD(+) + H2O = L-glutamate + NADH + 2 H(+). It participates in amino-acid degradation; L-proline degradation into L-glutamate; L-glutamate from L-proline: step 2/2. The polypeptide is 1-pyrroline-5-carboxylate dehydrogenase (Staphylococcus aureus (strain MSSA476)).